Reading from the N-terminus, the 508-residue chain is Protoporphyrinogen oxidase 2, chloroplastic/mitochondrial (508 aa).

Residues 1-22 (MASGAVADHQIEAVSGKRVAVV) constitute a chloroplast and mitochondrion transit peptide. Residues 23–28 (GAGVSG), 46–47 (EA), and 68–71 (GANT) contribute to the FAD site. The disordered stretch occupies residues 219–239 (KGGKSRDTKSSPGTKKGSRGS). Residues valine 268 and 475–477 (LSV) contribute to the FAD site.

It belongs to the protoporphyrinogen/coproporphyrinogen oxidase family. Protoporphyrinogen oxidase subfamily. FAD serves as cofactor.

The protein resides in the plastid. The protein localises to the chloroplast. It is found in the mitochondrion. The catalysed reaction is protoporphyrinogen IX + 3 O2 = protoporphyrin IX + 3 H2O2. The protein operates within porphyrin-containing compound metabolism; protoporphyrin-IX biosynthesis; protoporphyrin-IX from protoporphyrinogen-IX: step 1/1. Its pathway is porphyrin-containing compound metabolism; chlorophyll biosynthesis. Its function is as follows. Catalyzes the 6-electron oxidation of protoporphyrinogen-IX to form protoporphyrin-IX. The polypeptide is Protoporphyrinogen oxidase 2, chloroplastic/mitochondrial (PPOX2) (Arabidopsis thaliana (Mouse-ear cress)).